We begin with the raw amino-acid sequence, 259 residues long: uncharacterized protein (259 aa).

This is an uncharacterized protein from Schizosaccharomyces pombe (strain 972 / ATCC 24843) (Fission yeast).